Here is a 277-residue protein sequence, read N- to C-terminus: Thymidylate synthase (277 aa).

Arg21 contributes to the dUMP binding site. His51 lines the (6R)-5,10-methylene-5,6,7,8-tetrahydrofolate pocket. 126 to 127 (RR) lines the dUMP pocket. The Nucleophile role is filled by Cys159. DUMP is bound by residues 179 to 182 (RSAD), Asn190, and 220 to 222 (HLY). Asp182 contacts (6R)-5,10-methylene-5,6,7,8-tetrahydrofolate. Ser276 provides a ligand contact to (6R)-5,10-methylene-5,6,7,8-tetrahydrofolate.

The protein belongs to the thymidylate synthase family. Bacterial-type ThyA subfamily. Homodimer.

The protein resides in the cytoplasm. It carries out the reaction dUMP + (6R)-5,10-methylene-5,6,7,8-tetrahydrofolate = 7,8-dihydrofolate + dTMP. It functions in the pathway pyrimidine metabolism; dTTP biosynthesis. Functionally, catalyzes the reductive methylation of 2'-deoxyuridine-5'-monophosphate (dUMP) to 2'-deoxythymidine-5'-monophosphate (dTMP) while utilizing 5,10-methylenetetrahydrofolate (mTHF) as the methyl donor and reductant in the reaction, yielding dihydrofolate (DHF) as a by-product. This enzymatic reaction provides an intracellular de novo source of dTMP, an essential precursor for DNA biosynthesis. The sequence is that of Thymidylate synthase from Teredinibacter turnerae (strain ATCC 39867 / T7901).